Reading from the N-terminus, the 834-residue chain is Prominin-2 (834 aa).

The signal sequence occupies residues 1 to 26 (MKHTLALLAPLLGLGLGLALSQLAAG). At 27 to 106 (ATDCKFLGPA…NEVVRYEAGY (80 aa)) the chain is on the extracellular side. Residues 107 to 127 (VVCAVIAGLYLLLVPTAGLCF) form a helical membrane-spanning segment. Residues 128-153 (CCCRCHRRCGGRVKTEHKALACERAA) are Cytoplasmic-facing. A helical transmembrane segment spans residues 154–174 (LMVFLLLTTLLLLIGVVCAFV). The Extracellular segment spans residues 175-426 (TNQRTHEQMG…EVQRYETYRW (252 aa)). N270 carries an N-linked (GlcNAc...) asparagine glycan. The helical transmembrane segment at 427-447 (IVGCVLCSVVLFVVLCNLLGL) threads the bilayer. Over 448–472 (NLGIWGLSARDDPSHPEAKGEAGAR) the chain is Cytoplasmic. A helical membrane pass occupies residues 473 to 493 (FLMAGVGLSFLFAAPLILLVF). Residues 494 to 779 (ATFLVGGNVQ…LCDMMADPWN (286 aa)) are Extracellular-facing. S727 carries the phosphoserine modification. Residues 780–800 (AFWFCLAWCTFFLIPSIIFAV) traverse the membrane as a helical segment. Residues 801–834 (KTSKYFRPIRKRLSSTSSEETQLFHIPRVTSLKL) are Cytoplasmic-facing. Phosphoserine is present on S818.

Belongs to the prominin family. As to quaternary structure, binds cholesterol. In terms of processing, glycosylated. In terms of tissue distribution, present in saliva within small membrane particles (at protein level). Expressed in kidney, prostate, trachea, esophagus, salivary gland, thyroid gland, mammary gland adrenal gland, placenta, stomach, spinal cord and liver. In submucosal tumor, expressed in spindle-shaped or stellate stromal cells. Expressed in prostate cancer cell lines.

It is found in the apical cell membrane. The protein resides in the basolateral cell membrane. Its subcellular location is the cell projection. It localises to the microvillus membrane. The protein localises to the cilium membrane. This is Prominin-2 (PROM2) from Homo sapiens (Human).